A 1157-amino-acid polypeptide reads, in one-letter code: uncharacterized protein (1157 aa).

Residues 1-18 (MNRNIFITLLISLLALSG) form the signal peptide. A lipid anchor (N-palmitoyl cysteine) is attached at cysteine 19. Cysteine 19 carries S-diacylglycerol cysteine lipidation. The next 4 membrane-spanning stretches (helical) occupy residues 292 to 312 (LSVSALLTLYIMFTGFSFLIG), 394 to 414 (LGFIYIILYLIALYFIFLLIF), 423 to 443 (ALITIGMIITMAPIFICFMLF), and 458 to 478 (ISYAIQPIILFVGIAFIGMII). The disordered stretch occupies residues 1134 to 1157 (QYQKPVENSGRKLRKLEDHLRNMK). Positions 1148 to 1157 (KLEDHLRNMK) are enriched in basic and acidic residues.

Belongs to the TrbL/VirB6 family.

Its subcellular location is the cell membrane. This is an uncharacterized protein from Rickettsia bellii (strain RML369-C).